A 304-amino-acid chain; its full sequence is MLRAKMLGRGPYKPLAILRHMGPLCATRPQHWRFQHSYAEKHSNCARHPLWTGPVSSPGGTQQSPINIQWTDSVYDPKLAPLRVSYDAASCRYLWNTGYFFQVEFDDSCEESGISGGPLGNHYRLKQFHFHWGATDEWGSEHMVDGHAYPAELHLVHWNSMKYENYKKATTGENGLAVIGVFLKLGAHHEALQRLVDILPEVRHKDTQVTMGPFDPSCLLPACRDYWTYPGSLTTPPLAESVTWIVHKMPIEVSPSQLSTFRTLLFSGRGEDEEVMVNNFRPLQPLRGRNVRSSFQVPRVGTKS.

The N-terminal 34 residues, 1–34 (MLRAKMLGRGPYKPLAILRHMGPLCATRPQHWRF), are a transit peptide targeting the mitochondrion. Residues 35–295 (QHSYAEKHSN…LRGRNVRSSF (261 aa)) enclose the Alpha-carbonic anhydrase domain. The Zn(2+) site is built by histidine 129, histidine 131, and histidine 154.

It belongs to the alpha-carbonic anhydrase family. It depends on Zn(2+) as a cofactor. As to expression, high in liver, also detected in heart, lung, kidney, spleen and intestine.

It is found in the mitochondrion. The enzyme catalyses hydrogencarbonate + H(+) = CO2 + H2O. Functionally, mitochondrial carbonic anhydrase that catalyzes the reversible conversion of carbon dioxide to bicarbonate/HCO3. Mitochondria are impermeable to HCO3, and thus this intramitochondrial carbonic anhydrase is pivotal in providing HCO3 for multiple mitochondrial enzymes that catalyze the formation of essential metabolites of intermediary metabolism in the urea and Krebs cycles. This is Carbonic anhydrase 5A, mitochondrial from Rattus norvegicus (Rat).